We begin with the raw amino-acid sequence, 347 residues long: NADH-ubiquinone oxidoreductase chain 2 (347 aa).

10 helical membrane-spanning segments follow: residues 13–33 (IILGTSIVITSSHWLTVWIGF), 59–79 (YFLIQATASMLLMLAVTINLL), 84–104 (WAVSNMIDPLALTIMTLALAM), 111–131 (FHFWVPEVTQGVPLLSGLILL), 149–169 (IDPTLILTMSILSVLVGGWGG), 178–198 (IMAYSSISHMGWMTAILIYNP), 201–221 (TILNLLLYIMMTSTTFILLII), 240–260 (IAIIILTTMLSLGGLPPLTGF), 276–296 (IALSLFMAMAALLNLYFYTRL), and 326–346 (LSPLIIISTMILPLTPTMSAL).

This sequence belongs to the complex I subunit 2 family. Core subunit of respiratory chain NADH dehydrogenase (Complex I) which is composed of 45 different subunits. Interacts with TMEM242.

It is found in the mitochondrion inner membrane. The enzyme catalyses a ubiquinone + NADH + 5 H(+)(in) = a ubiquinol + NAD(+) + 4 H(+)(out). Functionally, core subunit of the mitochondrial membrane respiratory chain NADH dehydrogenase (Complex I) that is believed to belong to the minimal assembly required for catalysis. Complex I functions in the transfer of electrons from NADH to the respiratory chain. The immediate electron acceptor for the enzyme is believed to be ubiquinone. This is NADH-ubiquinone oxidoreductase chain 2 from Chrotopterus auritus (Peters's woolly false vampire bat).